Reading from the N-terminus, the 143-residue chain is 3-dehydroquinate dehydratase (143 aa).

Tyr-23 serves as the catalytic Proton acceptor. Substrate contacts are provided by Asn-74, His-80, and Asp-87. The active-site Proton donor is His-100. Residues 101–102 (IS) and Arg-111 contribute to the substrate site.

Belongs to the type-II 3-dehydroquinase family. Homododecamer.

It catalyses the reaction 3-dehydroquinate = 3-dehydroshikimate + H2O. The protein operates within metabolic intermediate biosynthesis; chorismate biosynthesis; chorismate from D-erythrose 4-phosphate and phosphoenolpyruvate: step 3/7. In terms of biological role, catalyzes a trans-dehydration via an enolate intermediate. In Endomicrobium trichonymphae, this protein is 3-dehydroquinate dehydratase.